The primary structure comprises 234 residues: UPF0104 membrane protein MJ1078 (234 aa).

5 helical membrane-spanning segments follow: residues 32–52 (VGTV…LLFI), 70–90 (IKWG…FLIV), 123–143 (LITL…FIFL), 164–184 (LTAI…LIYI), and 198–218 (VLIL…AIMF).

Belongs to the UPF0104 family.

Its subcellular location is the cell membrane. In Methanocaldococcus jannaschii (strain ATCC 43067 / DSM 2661 / JAL-1 / JCM 10045 / NBRC 100440) (Methanococcus jannaschii), this protein is UPF0104 membrane protein MJ1078.